A 2227-amino-acid chain; its full sequence is Genome polyprotein (2227 aa).

2 short sequence motifs ((L)YPX(n)L motif) span residues 167–171 and 200–205; these read YPHGL and YPVWEL. Residues 766 to 836 are involved in P1-2A pentamerization; that stretch reads MMSRIAAGDL…PRKKKGLFSQ (71 aa). The helical transmembrane segment at 1010-1030 threads the bilayer; the sequence is VTVEIINTVLCFVKSGILLYV. The membrane-penetrating ability stretch occupies residues 1043-1070; that stretch reads IGLLRVMNYVDIGCSVISCGKVFSKMLE. Residues 1127-1152 are a coiled coil; that stretch reads KKKDILNILKDNQQKIEKAIEEADKF. Residues 1204–1366 form the SF3 helicase domain; sequence HQKLKNLGSI…SFSKNPHNDM (163 aa). 1230 to 1237 contacts ATP; it reads GKRGGGKS. Residues 1462 to 1482 traverse the membrane as a helical segment; it reads WVAVGAAVGILGVLVGGWFVY. At Tyr-1499 the chain carries O-(5'-phospho-RNA)-tyrosine. The Peptidase C3 domain maps to 1514–1728; the sequence is DPVESQSTLE…VAKLVTQEMF (215 aa). Catalysis depends on for protease 3C activity residues His-1563, Asp-1603, and Cys-1691. Residues 1976 to 2097 form the RdRp catalytic domain; sequence DVGLDLDFSA…VFSRDVQIDN (122 aa).

This sequence belongs to the picornaviridae polyprotein family. In terms of assembly, homodimer. Homomultimer; probably interacts with membranes in a multimeric form. Seems to assemble into amyloid-like fibers. Homodimer. Monomer. Interacts with protein 3CD. As to quaternary structure, interacts with host ACBD3. In terms of assembly, interacts with protein 3AB. Interacts with human MAVS. As to quaternary structure, homodimer; disulfide-linked. In terms of assembly, homopentamer. Homooligomer. Interacts with capsid protein VP2. Interacts with capsid protein VP3. As to quaternary structure, interacts with capsid protein VP1. Interacts with capsid protein VP3. In terms of assembly, interacts with capsid protein VP1. Interacts with capsid protein VP2. Specific enzymatic cleavages by viral protease in vivo yield a variety of precursors and mature proteins. Polyprotein processing intermediates are produced, such as P1-2A which is a functional precursor of the structural proteins, VP0 which is a VP4-VP2 precursor, VP1-2A precursor, 3ABC precursor which is a stable and catalytically active precursor of 3A, 3B and 3C proteins, 3AB and 3CD precursors. The assembly signal 2A is removed from VP1-2A by a host protease, possibly host Cathepsin L. This cleavage occurs over a region of 3 amino-acids probably generating VP1 proteins with heterogeneous C-termini. In terms of processing, during virion maturation, immature virions are rendered infectious following cleavage of VP0 into VP4 and VP2. This maturation seems to be an autocatalytic event triggered by the presence of RNA in the capsid and is followed by a conformational change of the particle. Post-translationally, the assembly signal 2A is removed from VP1-2A by a host protease, possibly host Cathepsin L in naked virions. This cleavage does not occur in enveloped virions. This cleavage occurs over a region of 3 amino-acids probably generating VP1 proteins with heterogeneous C-termini. VPg is uridylylated prior to priming replication into VPg-pUpU. In terms of processing, unlike other picornaviruses, does not seem to be myristoylated.

The protein localises to the virion. The protein resides in the host endosome. It localises to the host multivesicular body. Its subcellular location is the host membrane. It is found in the host mitochondrion outer membrane. The protein localises to the host cytoplasm. The protein resides in the host cytoplasmic vesicle membrane. It catalyses the reaction RNA(n) + a ribonucleoside 5'-triphosphate = RNA(n+1) + diphosphate. The catalysed reaction is a ribonucleoside 5'-triphosphate + H2O = a ribonucleoside 5'-diphosphate + phosphate + H(+). It carries out the reaction Selective cleavage of Gln-|-Gly bond in the poliovirus polyprotein. In other picornavirus reactions Glu may be substituted for Gln, and Ser or Thr for Gly.. Its function is as follows. Capsid proteins VP1, VP2, and VP3 form a closed capsid enclosing the viral positive strand RNA genome. All these proteins contain a beta-sheet structure called beta-barrel jelly roll. Together they form an icosahedral capsid (T=3) composed of 60 copies of each VP1, VP2, and VP3, with a diameter of approximately 300 Angstroms. VP1 is situated at the 12 fivefold axes, whereas VP2 and VP3 are located at the quasi-sixfold axes. The naked capsid interacts with the host receptor HAVCR1 to provide virion attachment to and probably entry into the target cell. Functionally, VP0 precursor is a component of the immature procapsids. In terms of biological role, plays a role in the assembly of the 12 pentamers into an icosahedral structure. Has not been detected in mature virions, supposedly owing to its small size. Precursor component of immature procapsids that corresponds to an extended form of the structural protein VP1. After maturation, possibly by the host Cathepsin L, the assembly signal 2A is cleaved to give rise to the mature VP1 protein. Its function is as follows. Functions as a viroporin. Affects membrane integrity and causes an increase in membrane permeability. Involved in host intracellular membrane rearrangements probably to give rise to the viral factories. Does not disrupt calcium homeostasis or glycoprotein trafficking. Antagonizes the innate immune response of the host by suppressing IFN-beta synthesis, which it achieves by interfering with the RIG-I/IFIH1 pathway. Functionally, affects membrane integrity and causes an increase in membrane permeability. In terms of biological role, associates with and induces structural rearrangements of intracellular membranes. Displays RNA-binding activity. The precursor 3ABC is targeted to the mitochondrial membrane where protease 3C activity cleaves and inhibits the host antiviral protein MAVS, thereby disrupting activation of IRF3 through the IFIH1/MDA5 pathway. In vivo, the protease activity of 3ABC precursor is more efficient in cleaving the 2BC precursor than that of protein 3C. The 3ABC precursor may therefore play a role in the proteolytic processing of the polyprotein. Possible viroporin. Its function is as follows. Interacts with the 3CD precursor and with RNA structures found at both the 5'- and 3'-termini of the viral genome. Since the 3AB precursor contains the hydrophobic domain 3A, it probably anchors the whole viral replicase complex to intracellular membranes on which viral RNA synthesis occurs. Functionally, may serve as membrane anchor to the 3AB and 3ABC precursors via its hydrophobic domain. May interact with RNA. In terms of biological role, acts as a primer for viral RNA replication and remains covalently bound to viral genomic RNA. VPg is uridylylated prior to priming replication into VPg-pUpU. The VPg-pUpU is then used as primer on the genomic RNA poly(A) by the RNA-dependent RNA polymerase to replicate the viral genome. Cysteine protease that generates mature viral proteins from the precursor polyprotein. In addition to its proteolytic activity, it binds to viral RNA, and thus influences viral genome replication. RNA and substrate bind cooperatively to the protease. Cleaves IKBKG/NEMO to impair innate immune signaling. Cleaves host PABPC1 which may participate in the switch of viral translation to RNA synthesis. Its function is as follows. Interacts with the 3AB precursor and with RNA structures found at both the 5'- and 3'-termini of the viral genome. Disrupts TLR3 signaling by degrading the host adapter protein TICAM1/TRIF. Functionally, replicates genomic and antigenomic RNA by recognizing replications specific signals. The protein is Genome polyprotein of Cercopithecus hamlyni (Owl-faced monkey).